Reading from the N-terminus, the 288-residue chain is MGQKVHPHGFRLGISTDWKSRWFADKLYKDYIGEDVKIRRMMSKGLERAGISKVDIERTRDRVRVDIHTARPGIVIGRKGAEADRIRGKLEKLTGKQVQLNIIEVKSPESDAQLVAQGVAEQLSSRVSFRRAMRKAMQSAMKNPVCKGIRVQVSGRLGGAEMSRTEFYREGRVPLHTLRANIEYGFFEARTTFGRIGVKVWIYKGDAVPGRETPAEAPSRPRRERGDRSERPRRGRSGSSGTTAGGTEAGRAAATTIAQAAETPSGEPVDADAVASAATQPAETQQEG.

The 69-residue stretch at 38-106 (IRRMMSKGLE…QVQLNIIEVK (69 aa)) folds into the KH type-2 domain. Residues 209–288 (PGRETPAEAP…TQPAETQQEG (80 aa)) are disordered. Basic and acidic residues predominate over residues 219 to 232 (SRPRRERGDRSERP). The segment covering 249-264 (AGRAAATTIAQAAETP) has biased composition (low complexity). A compositionally biased stretch (polar residues) spans 277 to 288 (AATQPAETQQEG).

Belongs to the universal ribosomal protein uS3 family. As to quaternary structure, part of the 30S ribosomal subunit. Forms a tight complex with proteins S10 and S14.

Binds the lower part of the 30S subunit head. Binds mRNA in the 70S ribosome, positioning it for translation. The chain is Small ribosomal subunit protein uS3 from Salinispora arenicola (strain CNS-205).